The following is a 222-amino-acid chain: Ribosomal RNA small subunit methyltransferase I (222 aa).

The protein belongs to the methyltransferase superfamily. RsmI family.

Its subcellular location is the cytoplasm. It catalyses the reaction cytidine(1402) in 16S rRNA + S-adenosyl-L-methionine = 2'-O-methylcytidine(1402) in 16S rRNA + S-adenosyl-L-homocysteine + H(+). Catalyzes the 2'-O-methylation of the ribose of cytidine 1402 (C1402) in 16S rRNA. This chain is Ribosomal RNA small subunit methyltransferase I, found in Mycoplasmopsis pulmonis (strain UAB CTIP) (Mycoplasma pulmonis).